The sequence spans 69 residues: Large ribosomal subunit protein bL31 (69 aa).

Cys16, Cys18, Cys36, and Cys39 together coordinate Zn(2+).

Belongs to the bacterial ribosomal protein bL31 family. Type A subfamily. Part of the 50S ribosomal subunit. Zn(2+) serves as cofactor.

Functionally, binds the 23S rRNA. This Ruminiclostridium cellulolyticum (strain ATCC 35319 / DSM 5812 / JCM 6584 / H10) (Clostridium cellulolyticum) protein is Large ribosomal subunit protein bL31.